Reading from the N-terminus, the 836-residue chain is Glutamate receptor ionotropic, kainate glr-3 (836 aa).

A signal peptide spans 1–19 (MFWIAKTLIAFLILLKTDC). Topologically, residues 20-523 (YKIAIPANLI…WFKFMDPLST (504 aa)) are extracellular. Cysteine 76 and cysteine 320 are oxidised to a cystine. N-linked (GlcNAc...) asparagine glycosylation is found at asparagine 225, asparagine 257, asparagine 356, asparagine 391, and asparagine 419. L-glutamate contacts are provided by residues 478 to 480 (SLT) and arginine 485. The chain crosses the membrane as a helical span at residues 524-544 (QVWIMTFASYFVVSVAIWIIA). The Cytoplasmic portion of the chain corresponds to 545–600 (KISPYEQFERDEDNGQYKPVDNQFSLRNSFWFTVCSLMQQGSELCPRAASTRLLTG). Residues 601 to 621 (IWWFFALILISSYTANLAAVL) form a helical membrane-spanning segment. Over 622 to 780 (TTRRMETPIE…KRKDQDDGES (159 aa)) the chain is Extracellular. Position 651–652 (651–652 (ST)) interacts with L-glutamate. N-linked (GlcNAc...) asparagine glycosylation occurs at asparagine 657. An L-glutamate-binding site is contributed by glutamate 699. A helical transmembrane segment spans residues 781-801 (IGGIFIILVVGLVLTAVLVIF). Residues 802 to 836 (ELITTRKPSPAQSQVIRHVNVIPSFKLGFFRWNVN) lie on the Cytoplasmic side of the membrane.

The protein belongs to the glutamate-gated ion channel (TC 1.A.10.1) family. In terms of tissue distribution, expressed in the intestine and in the ASER neuron. Also expressed in the thermosensitive RIA interneuron.

The protein localises to the cell membrane. Its subcellular location is the postsynaptic cell membrane. Activated by low temperature of 18 degrees Celsius in ASER neuron. Ionotropic glutamate receptor. Activation by glutamate requires additional verification. L-glutamate acts as an excitatory neurotransmitter at many synapses in the central nervous system. Binding of the excitatory neurotransmitter L-glutamate induces a conformation change, leading to the opening of the cation channel, and thereby converts the chemical signal to an electrical impulse. The receptor then desensitizes rapidly and enters a transient inactive state, characterized by the presence of bound agonist. In terms of biological role, independent of its ionotropic glutamate receptor activity, acts as a thermoreceptor in the ASER neuron where it triggers a calcium response to activate cold avoidance behavior in response to temperatures below 19 degrees Celsius. Possibly functions as a metabotropic cold receptor and acts upstream of the G(o) G protein goa-1 in the ASER neuron. Also functions in cold sensing in the intestine. The protein is Glutamate receptor ionotropic, kainate glr-3 of Caenorhabditis elegans.